A 260-amino-acid chain; its full sequence is UPF0246 protein Bphyt_1375 (260 aa).

It belongs to the UPF0246 family.

This Paraburkholderia phytofirmans (strain DSM 17436 / LMG 22146 / PsJN) (Burkholderia phytofirmans) protein is UPF0246 protein Bphyt_1375.